Here is a 605-residue protein sequence, read N- to C-terminus: Apoptosis-inducing factor 3 (605 aa).

A disordered region spans residues 22–45 (KERGKEELSASGKGSPRAYQGNGT). The 96-residue stretch at 70–165 (AAVCHVKDLE…VKIEKEKVYV (96 aa)) folds into the Rieske domain. Residues Cys-109, His-111, Cys-128, and His-131 each coordinate [2Fe-2S] cluster. FAD-binding positions include 201–205 (GAGAA), Arg-235, Lys-240, Val-270, Asp-467, and Trp-514.

This sequence belongs to the FAD-dependent oxidoreductase family. Ubiquitous. Expressed in bone marrow, cerebral cortex, liver, ovary, thymus, thyroid gland and tongue (at protein level).

It is found in the mitochondrion. In terms of biological role, induces apoptosis through a caspase dependent pathway. Reduces mitochondrial membrane potential. The chain is Apoptosis-inducing factor 3 (AIFM3) from Homo sapiens (Human).